The sequence spans 369 residues: uncharacterized protein (369 aa).

It belongs to the myo-inositol 1-phosphate synthase family.

This is an uncharacterized protein from Mycobacterium leprae (strain TN).